Consider the following 571-residue polypeptide: Adenine deaminase (571 aa).

This sequence belongs to the metallo-dependent hydrolases superfamily. Adenine deaminase family. Mn(2+) is required as a cofactor.

It catalyses the reaction adenine + H2O + H(+) = hypoxanthine + NH4(+). In Dehalococcoides mccartyi (strain CBDB1), this protein is Adenine deaminase.